The following is a 607-amino-acid chain: Pogo transposable element with KRAB domain (607 aa).

Positions 8 to 29 (LNLTLKEEQKEEEVEIQELEDG) form a coiled coil. K13 participates in a covalent cross-link: Glycyl lysine isopeptide (Lys-Gly) (interchain with G-Cter in SUMO2). Residues 47–118 (ALFDEVAIYF…DEWRLQGVTF (72 aa)) enclose the KRAB domain. The 74-residue stretch at 250–323 (AFRGPKNGRF…MRRYDLSLRH (74 aa)) folds into the HTH CENPB-type domain. The region spanning 355 to 567 (YEVAQMGNAD…ISSESIVQGF (213 aa)) is the DDE-1 domain. A Glycyl lysine isopeptide (Lys-Gly) (interchain with G-Cter in SUMO2) cross-link involves residue K384. The segment at 588-607 (GELPKEPPKECGPESVAEGD) is disordered. Positions 589-599 (ELPKEPPKECG) are enriched in basic and acidic residues.

It is found in the nucleus. This is Pogo transposable element with KRAB domain (Pogk) from Mus musculus (Mouse).